We begin with the raw amino-acid sequence, 759 residues long: Holliday junction resolvase YEN1 (759 aa).

Disordered stretches follow at residues 62 to 83 (RSRS…SQEY), 498 to 518 (SQSP…TRRQ), and 683 to 702 (KSRT…KSRS). Residues 500–512 (SPLKRSNSPSRSK) are compositionally biased toward low complexity. Phosphoserine is present on residues Ser730 and Ser731.

Belongs to the XPG/RAD2 endonuclease family. GEN subfamily.

It localises to the cytoplasm. It is found in the nucleus. Functionally, endonuclease which resolves Holliday junctions by the introduction of symmetrically related cuts across the junction point, to produce nicked duplex products in which the nicks can be readily ligated. Four-way DNA intermediates, also known as Holliday junctions, are formed during homologous recombination and DNA repair, and their resolution is necessary for proper chromosome segregation. Involved in DNA-damage repair in vegetative cells. The protein is Holliday junction resolvase YEN1 (YEN1) of Saccharomyces cerevisiae (strain ATCC 204508 / S288c) (Baker's yeast).